The primary structure comprises 178 residues: Small ribosomal subunit protein uS5 (178 aa).

An S5 DRBM domain is found at 17-80; it reads FEERIVEIRR…AAARASVVEI (64 aa).

Belongs to the universal ribosomal protein uS5 family. In terms of assembly, part of the 30S ribosomal subunit. Contacts proteins S4 and S8.

Functionally, with S4 and S12 plays an important role in translational accuracy. Located at the back of the 30S subunit body where it stabilizes the conformation of the head with respect to the body. This chain is Small ribosomal subunit protein uS5, found in Pseudothermotoga lettingae (strain ATCC BAA-301 / DSM 14385 / NBRC 107922 / TMO) (Thermotoga lettingae).